Reading from the N-terminus, the 545-residue chain is Glucose-6-phosphate isomerase (545 aa).

Glutamate 351 (proton donor) is an active-site residue. Catalysis depends on residues histidine 382 and lysine 510.

It belongs to the GPI family.

Its subcellular location is the cytoplasm. The enzyme catalyses alpha-D-glucose 6-phosphate = beta-D-fructose 6-phosphate. It functions in the pathway carbohydrate biosynthesis; gluconeogenesis. The protein operates within carbohydrate degradation; glycolysis; D-glyceraldehyde 3-phosphate and glycerone phosphate from D-glucose: step 2/4. Its function is as follows. Catalyzes the reversible isomerization of glucose-6-phosphate to fructose-6-phosphate. The chain is Glucose-6-phosphate isomerase from Helicobacter acinonychis (strain Sheeba).